Consider the following 346-residue polypeptide: Uroporphyrinogen decarboxylase (346 aa).

Residues 26–30 (RQAGR), aspartate 76, tyrosine 153, serine 208, and histidine 323 each bind substrate.

It belongs to the uroporphyrinogen decarboxylase family. As to quaternary structure, homodimer.

The protein localises to the cytoplasm. It carries out the reaction uroporphyrinogen III + 4 H(+) = coproporphyrinogen III + 4 CO2. Its pathway is porphyrin-containing compound metabolism; protoporphyrin-IX biosynthesis; coproporphyrinogen-III from 5-aminolevulinate: step 4/4. In terms of biological role, catalyzes the decarboxylation of four acetate groups of uroporphyrinogen-III to yield coproporphyrinogen-III. This Prochlorococcus marinus (strain MIT 9515) protein is Uroporphyrinogen decarboxylase.